The primary structure comprises 1872 residues: Histone acetyltransferase KAT6B (1872 aa).

In terms of domain architecture, SAMD1-like winged helix (WH) spans 1 to 77 (MVKLANPLYT…LASYKDPDNP (77 aa)). 2 disordered regions span residues 70–103 (SYKD…CNDL) and 168–207 (KEGP…HEKD). One can recognise an H15 domain in the interval 104 to 177 (RNVDWNKLLK…KEGPQYRVNS (74 aa)). The span at 189–202 (PSAFPSSLPPVSLL) shows a compositional bias: low complexity. PHD-type zinc fingers lie at residues 214 to 273 (IPIC…CKTC) and 270 to 321 (CKTC…CRPK). Serine 356 bears the Phosphoserine mark. Residues 361–417 (EGSMSAFTGRGSPGRGQKTKVSTTPSSGHAASGKHSSSRLAVTDPTRPGATTKTTTS) form a disordered region. The tract at residues 362-535 (GSMSAFTGRG…ECESGVEDCG (174 aa)) is negatively regulates HAT activity. Positions 386–395 (SSGHAASGKH) are enriched in low complexity. A Glycyl lysine isopeptide (Lys-Gly) (interchain with G-Cter in SUMO2) cross-link involves residue lysine 491. An MYST-type HAT domain is found at 533–807 (DCGRYPSVIE…LDPESLRWTP (275 aa)). Positions 536-826 (RYPSVIEFGK…EEEREAEKEA (291 aa)) are catalytic. Residues 566–591 (LYLCEFCLKYMKSKNILLRHSKKCGW) form a C2HC MYST-type zinc finger. Residues 570–826 (EFCLKYMKSK…EEEREAEKEA (257 aa)) form an interaction with BRPF1 region. Lysine 633 carries the post-translational modification N6-acetyllysine; by autocatalysis. Acetyl-CoA contacts are provided by residues 674–678 (SCIMI) and 683–689 (QRQGFGR). Glutamate 709 functions as the Proton donor/acceptor in the catalytic mechanism. Serine 713 is a binding site for acetyl-CoA. The span at 846 to 860 (SRVSSRQSSAKVQSK) shows a compositional bias: low complexity. Disordered stretches follow at residues 846-1018 (SRVS…NHFF), 1031-1252 (DAEH…FKDA), 1283-1358 (MSCN…DDTF), and 1388-1418 (DECQ…SPSV). 3 positions are modified to N6-acetyllysine: lysine 856, lysine 860, and lysine 862. The residue at position 866 (serine 866) is a Phosphoserine. Residues 887–909 (SEEEEEEEEEDDEEEEEEEEEES) are compositionally biased toward acidic residues. Polar residues predominate over residues 910–924 (IQTSPPRLTKPQSVS). Basic residues predominate over residues 925 to 944 (IKRKRPFVVKKKRGRKRRRI). The segment covering 946–959 (SSVTTETISETTEV) has biased composition (low complexity). Residues 991–1004 (PVLRKAFPHQPGKK) show a composition bias toward basic residues. Basic and acidic residues-rich tracts occupy residues 1031–1047 (DAEH…EPLK) and 1094–1114 (EEQK…REVT). Over residues 1155–1176 (EEGEEEGEEEGEREEQEEEEEV) the composition is skewed to acidic residues. The span at 1177–1207 (TTEKDLDGAKSKENPEPEISMEKEDPVHLGD) shows a compositional bias: basic and acidic residues. Residues 1208–1217 (HEEDEDEEEE) are compositionally biased toward acidic residues. 2 stretches are compositionally biased toward basic and acidic residues: residues 1238-1252 (NMER…FKDA) and 1310-1320 (QTQKQDQKNSD). The span at 1339–1349 (ETAQAVQSLTQ) shows a compositional bias: polar residues. The interaction with RUNX1 and RUNX2 stretch occupies residues 1359-1872 (PDCAETQEAC…QSLNGSYMRR (514 aa)). Over residues 1393-1410 (SDHSSPVSSVHSHPGQSV) the composition is skewed to low complexity.

The protein belongs to the MYST (SAS/MOZ) family. Component of the MOZ/MORF complex composed at least of ING5, KAT6A, KAT6B, MEAF6 and one of BRPF1, BRD1/BRPF2 and BRPF3. Interacts with RUNX1 and RUNX2. Post-translationally, autoacetylation at Lys-633 is required for proper function. In terms of tissue distribution, ubiquitously expressed.

Its subcellular location is the nucleus. The catalysed reaction is L-lysyl-[protein] + acetyl-CoA = N(6)-acetyl-L-lysyl-[protein] + CoA + H(+). Histone acetyltransferase which may be involved in both positive and negative regulation of transcription. Required for RUNX2-dependent transcriptional activation. Component of the MOZ/MORF complex which has a histone H3 acetyltransferase activity. Involved in cerebral cortex development. This is Histone acetyltransferase KAT6B (Kat6b) from Mus musculus (Mouse).